Consider the following 257-residue polypeptide: Probable enoyl-CoA hydratase echA17 (257 aa).

This sequence belongs to the enoyl-CoA hydratase/isomerase family.

The enzyme catalyses a (3S)-3-hydroxyacyl-CoA = a (2E)-enoyl-CoA + H2O. The catalysed reaction is a 4-saturated-(3S)-3-hydroxyacyl-CoA = a (3E)-enoyl-CoA + H2O. Functionally, could possibly oxidize fatty acids using specific components. This is Probable enoyl-CoA hydratase echA17 (echA17) from Mycobacterium avium (strain 104).